Consider the following 174-residue polypeptide: Bifunctional protein PyrR (174 aa).

The PRPP-binding motif lies at 97-109 (VVIVDDVLYTGRT).

Belongs to the purine/pyrimidine phosphoribosyltransferase family. PyrR subfamily. In terms of assembly, homodimer and homohexamer; in equilibrium.

It catalyses the reaction UMP + diphosphate = 5-phospho-alpha-D-ribose 1-diphosphate + uracil. Its function is as follows. Regulates transcriptional attenuation of the pyrimidine nucleotide (pyr) operon by binding in a uridine-dependent manner to specific sites on pyr mRNA. This disrupts an antiterminator hairpin in the RNA and favors formation of a downstream transcription terminator, leading to a reduced expression of downstream genes. Functionally, also displays a weak uracil phosphoribosyltransferase activity which is not physiologically significant. The chain is Bifunctional protein PyrR from Macrococcus caseolyticus (strain JCSC5402) (Macrococcoides caseolyticum).